The sequence spans 728 residues: Plakophilin-1 (728 aa).

The tract at residues 1 to 235 is required for binding to single stranded DNA; that stretch reads MNHSPLKTAL…SFGHSRASSK (235 aa). The segment at 1-287 is required for interaction with EIF4A1; that stretch reads MNHSPLKTAL…ESAKQQVYQL (287 aa). Serine 4 carries the phosphoserine; by RIPK4 modification. The interval 48 to 69 is disordered; sequence TVKRQKSKSSQSSTLSHSNRGS. Phosphorylation in this region is required for cytoplasmic localization and protein stabilization regions lie at residues 54-69 and 117-192; these read SKSS…NRGS and RFSS…STCS. Phosphoserine is present on serine 119. Position 120 is a phosphoserine; by RIPK4 (serine 120). Serine 122 is modified (phosphoserine). Serine 143 bears the Phosphoserine; by RIPK4 mark. The tract at residues 161-270 is required for WNT-mediated nuclear localization; that stretch reads YCDPRGTLRK…KYQAIGAYYI (110 aa). ARM repeat units lie at residues 244–275, 276–317, 318–360, 361–412, 413–443, 505–536, 537–583, 584–629, and 630–694; these read SGLT…HTCF, QDES…NLVF, RSTP…NLSS, TDEL…GCLR, NLSS…NCVA, NYDC…LNLM, GKSK…IARL, LQSG…SHTG, and NTSN…DMWA.

Belongs to the beta-catenin family. In terms of assembly, part of a complex that contains DSG3, PKP1, YAP1 and YWHAG; the complex is required for localization of DSG3 and YAP1 to the cell membrane in keratinocytes. Interacts (via N-terminus) with KRT5/CK5, KRT8/CK8 (via rod domain), KRT15/CK15 and KRT18/CK18 (via rod domain) as part of intermediate filaments. Interacts with VIM (via rod domain). Interacts with DSP. Interacts with DES. Interacts with FXR1; the interaction may facilitate the binding of PKP1 to PKP2, PKP3 and DSP mRNA. Interacts (via N-terminus) with EIF4A1; the interaction promotes EIF4A1 recruitment to the cap-dependent translation complex and EIF4A1 ATPase activity. Interacts with TJP1/ZO-1; the interaction facilitates TJP1/ZO-1 localization to the plasma membrane. Interacts (when phosphorylated) with YWHAG; the interaction results in translocation of PKP1 to the cytoplasm and loss of intercellular adhesion in keratinocytes. In terms of processing, phosphorylated by AKT2; required for interaction with YWHAG and subsequent localization away from desmosomes to the cytoplasm. Phosphorylation of Ser-119 by AKT2 promotes PKP1-driven cap-dependent mRNA translation and decreases intercellular adhesion, phosphorylation is promoted by insulin. Phosphorylation by RIPK4 at the N-terminus is required for its role in differentiation of keratinocytes and DSG1 localization at cell junctions. Expressed in undifferentiated keratinocytes of the epidermis at birth, expression increases as differentiation proceeds (at protein level). Expressed in the cervical loop during early tooth differentiation, expression is then present between ameloblasts, at ameloblast-ameloblast junctions and in the stratum intermedium during pre-secretory and secretory stages of tooth development (at protein level).

The protein resides in the nucleus. It localises to the cytoplasm. Its subcellular location is the perinuclear region. The protein localises to the cell junction. It is found in the desmosome. The protein resides in the cell membrane. It localises to the stress granule. In terms of biological role, a component of desmosome cell-cell junctions which are required for positive regulation of cellular adhesion. Plays a role in desmosome protein expression regulation and localization to the desmosomal plaque, thereby maintaining cell sheet integrity and anchorage of desmosomes to intermediate filaments. Required for localization of DSG3 and YAP1 to the cell membrane in keratinocytes in response to mechanical strain, via the formation of an interaction complex composed of DSG3, YAP1, PKP1 and YWHAG. Positively regulates differentiation of keratinocytes, potentially via promoting localization of DSG1 at desmosome cell junctions. Required for calcium-independent development and maturation of desmosome plaques specifically at lateral cell-cell contacts in differentiating keratinocytes. Plays a role in the maintenance of DSG3 protein abundance, DSG3 clustering and localization of these clusters to the cell membrane in keratinocytes. May also promote keratinocyte proliferation and morphogenesis during postnatal development. Required for tight junction inside-out transepidermal barrier function of the skin, and is thereby involved in neonatal survival possibly via maintenance of hydration levels. Promotes Wnt-mediated proliferation and differentiation of ameloblasts, via facilitating TJP1/ZO-1 localization to tight junctions. Binds single-stranded DNA (ssDNA), and may thereby play a role in sensing DNA damage and promoting cell survival. Positively regulates cap-dependent translation and as a result cell proliferation, via recruitment of EIF4A1 to the initiation complex and promotion of EIF4A1 ATPase activity. Regulates the mRNA stability and protein abundance of desmosome components PKP2, PKP3, DSC2 and DSP, potentially via its interaction with FXR1. This chain is Plakophilin-1 (Pkp1), found in Mus musculus (Mouse).